The primary structure comprises 450 residues: uncharacterized protein (450 aa).

K283 bears the N6-(pyridoxal phosphate)lysine mark.

The protein belongs to the class-III pyridoxal-phosphate-dependent aminotransferase family. The cofactor is pyridoxal 5'-phosphate.

Functionally, essential for glycerol catabolism. This is an uncharacterized protein from Bacillus subtilis (strain 168).